We begin with the raw amino-acid sequence, 159 residues long: MQVRIIAVGKIKERFLSEGIAEYTKRLSPYLKLSIVEIPEEHRGTRAPAGQEELAKEKEGGRILAAIPERAYVVALDLRGTEISSIELAARMHDWQLAGTNTIAFVIGGDLGLSDAVINRAAFRLSLSPLTFTHPMARLILVEQLYRACRINSGEPYHK.

S-adenosyl-L-methionine is bound by residues L76, G108, and 127 to 132; that span reads LSPLTF.

The protein belongs to the RNA methyltransferase RlmH family.

Its subcellular location is the cytoplasm. The enzyme catalyses pseudouridine(1915) in 23S rRNA + S-adenosyl-L-methionine = N(3)-methylpseudouridine(1915) in 23S rRNA + S-adenosyl-L-homocysteine + H(+). Functionally, specifically methylates the pseudouridine at position 1915 (m3Psi1915) in 23S rRNA. This Methanoregula boonei (strain DSM 21154 / JCM 14090 / 6A8) protein is Putative ribosomal RNA large subunit methyltransferase H.